The primary structure comprises 94 residues: Large ribosomal subunit protein eL42 (94 aa).

Cysteine 11, cysteine 14, cysteine 71, and cysteine 74 together coordinate Zn(2+). The C4-type zinc-finger motif lies at cysteine 11–cysteine 74.

Belongs to the eukaryotic ribosomal protein eL42 family. As to quaternary structure, part of the 50S ribosomal subunit. Requires Zn(2+) as cofactor.

Functionally, binds to the 23S rRNA. In Pyrococcus furiosus (strain ATCC 43587 / DSM 3638 / JCM 8422 / Vc1), this protein is Large ribosomal subunit protein eL42.